The primary structure comprises 259 residues: Imidazole glycerol phosphate synthase subunit HisF (259 aa).

Residues Asp11 and Asp130 contribute to the active site.

It belongs to the HisA/HisF family. In terms of assembly, heterodimer of HisH and HisF.

Its subcellular location is the cytoplasm. The catalysed reaction is 5-[(5-phospho-1-deoxy-D-ribulos-1-ylimino)methylamino]-1-(5-phospho-beta-D-ribosyl)imidazole-4-carboxamide + L-glutamine = D-erythro-1-(imidazol-4-yl)glycerol 3-phosphate + 5-amino-1-(5-phospho-beta-D-ribosyl)imidazole-4-carboxamide + L-glutamate + H(+). It participates in amino-acid biosynthesis; L-histidine biosynthesis; L-histidine from 5-phospho-alpha-D-ribose 1-diphosphate: step 5/9. Its function is as follows. IGPS catalyzes the conversion of PRFAR and glutamine to IGP, AICAR and glutamate. The HisF subunit catalyzes the cyclization activity that produces IGP and AICAR from PRFAR using the ammonia provided by the HisH subunit. The protein is Imidazole glycerol phosphate synthase subunit HisF of Desulfosudis oleivorans (strain DSM 6200 / JCM 39069 / Hxd3) (Desulfococcus oleovorans).